The following is a 268-amino-acid chain: ClpXP adapter protein SpxH (268 aa).

Belongs to the SpxH family. Interacts with Spx.

The protein localises to the cytoplasm. Functionally, adapter protein required for efficient degradation of Spx by ClpXP under non-stress conditions. Interaction with Spx stabilizes Spx and exposes the C-terminus of Spx for recognition and proteolysis by ClpXP. In Staphylococcus aureus (strain COL), this protein is ClpXP adapter protein SpxH.